Reading from the N-terminus, the 155-residue chain is Endoribonuclease YbeY (155 aa).

Zn(2+) contacts are provided by H117, H121, and H127.

Belongs to the endoribonuclease YbeY family. Zn(2+) is required as a cofactor.

It is found in the cytoplasm. In terms of biological role, single strand-specific metallo-endoribonuclease involved in late-stage 70S ribosome quality control and in maturation of the 3' terminus of the 16S rRNA. The sequence is that of Endoribonuclease YbeY from Treponema denticola (strain ATCC 35405 / DSM 14222 / CIP 103919 / JCM 8153 / KCTC 15104).